A 212-amino-acid polypeptide reads, in one-letter code: MKSFAACVLLLCALFFEQVFAVRFDIPASTKPEQVCIRDFVSEGQLVLIDIETDGSVGDGQQLNLYVRDSNGNEYRRNRDIAGEVRVVFTAPQSTSFDVCFENVAQVNGRSLSRSIELDIESGSEARDWNKIQASEKLKPVEVELRRIEELTDEIVDEFNYLKGREERLRDTNESTNRRVRNFSIAVIVVLVALGAWQVNYMKNFFRAKHII.

The signal sequence occupies residues 1 to 21 (MKSFAACVLLLCALFFEQVFA). Residues 22-181 (VRFDIPASTK…TNESTNRRVR (160 aa)) lie on the Lumenal side of the membrane. The region spanning 34 to 122 (QVCIRDFVSE…SRSIELDIES (89 aa)) is the GOLD domain. The helical transmembrane segment at 182–202 (NFSIAVIVVLVALGAWQVNYM) threads the bilayer. Residues 203-212 (KNFFRAKHII) lie on the Cytoplasmic side of the membrane.

Belongs to the EMP24/GP25L family.

It is found in the endoplasmic reticulum membrane. The protein localises to the golgi apparatus membrane. In terms of biological role, constituent of COPII-coated endoplasmic reticulum-derived transport vesicles. Required for efficient transport of a subset of secretory proteins to the Golgi. Facilitates retrograde transport from the Golgi to the endoplasmic reticulum. In Kluyveromyces lactis (strain ATCC 8585 / CBS 2359 / DSM 70799 / NBRC 1267 / NRRL Y-1140 / WM37) (Yeast), this protein is Endoplasmic reticulum vesicle protein 25 (ERV25).